The sequence spans 194 residues: Early growth response protein 1 (194 aa).

3 consecutive C2H2-type zinc fingers follow at residues 1-18 (CDRR…IRIH), 24-46 (FQCR…IRTH), and 52-74 (FACD…TKIH). The tract at residues 66-88 (ERKRHTKIHLRQKDKKVEKAASV) is disordered. The span at 69–79 (RHTKIHLRQKD) shows a compositional bias: basic residues.

The protein belongs to the EGR C2H2-type zinc-finger protein family.

It localises to the nucleus. Its subcellular location is the cytoplasm. In terms of biological role, transcriptional regulator. Recognizes and binds to the DNA sequence 5'-GCG(T/G)GGGCG-3'(EGR-site) in the promoter region of target genes. Binds double-stranded target DNA, irrespective of the cytosine methylation status. Regulates the transcription of numerous target genes, and thereby plays an important role in regulating the response to growth factors, DNA damage, and ischemia. Plays a role in the regulation of cell survival, proliferation and cell death. Mediates responses to ischemia and hypoxia; regulates the expression of proteins that are involved in inflammatory processes. Plays a role in regulating the expression of circadian clock genes. The sequence is that of Early growth response protein 1 (EGR1) from Coturnix japonica (Japanese quail).